Here is an 809-residue protein sequence, read N- to C-terminus: Glutamine--tRNA ligase (809 aa).

Positions 185-198 (DLIKKKTKNNEKKK) are enriched in basic and acidic residues. A disordered region spans residues 185 to 216 (DLIKKKTKNNEKKKTNSAKKSSDNSASSGPKR). Residues 258 to 268 (PEPNGYLHIGH) carry the 'HIGH' region motif. ATP is bound by residues 259 to 261 (EPN) and 265 to 271 (HIGHSKA). Residue D291 participates in L-glutamine binding. Residue S378 is modified to Phosphoserine. Y440 provides a ligand contact to L-glutamine. ATP contacts are provided by residues T459, 488-489 (RL), and 496-498 (LSK). A 'KMSKS' region motif is present at residues 495 to 499 (VLSKR).

Belongs to the class-I aminoacyl-tRNA synthetase family.

The enzyme catalyses tRNA(Gln) + L-glutamine + ATP = L-glutaminyl-tRNA(Gln) + AMP + diphosphate. This is Glutamine--tRNA ligase (GLN4) from Saccharomyces cerevisiae (strain ATCC 204508 / S288c) (Baker's yeast).